The following is a 142-amino-acid chain: Photosystem II extrinsic protein U (142 aa).

A signal peptide spans 1 to 29; that stretch reads MKGLVRLLTVFSLLLGCWGWLGTTQIAQA.

It belongs to the PsbU family. In terms of assembly, PSII is composed of 1 copy each of membrane proteins PsbA, PsbB, PsbC, PsbD, PsbE, PsbF, PsbH, PsbI, PsbJ, PsbK, PsbL, PsbM, PsbT, PsbX, PsbY, PsbZ, Psb30/Ycf12, peripheral proteins PsbO, CyanoQ (PsbQ), PsbU, PsbV and a large number of cofactors. It forms dimeric complexes.

The protein localises to the cellular thylakoid membrane. Its function is as follows. One of the extrinsic, lumenal subunits of photosystem II (PSII). PSII is a light-driven water plastoquinone oxidoreductase, using light energy to abstract electrons from H(2)O, generating a proton gradient subsequently used for ATP formation. The extrinsic proteins stabilize the structure of photosystem II oxygen-evolving complex (OEC), the ion environment of oxygen evolution and protect the OEC against heat-induced inactivation. The protein is Photosystem II extrinsic protein U of Trichormus variabilis (strain ATCC 29413 / PCC 7937) (Anabaena variabilis).